The chain runs to 380 residues: Cytochrome b (380 aa).

Helical transmembrane passes span 34 to 54 (FGSL…LLAM), 78 to 99 (WLIR…YLHI), 114 to 134 (WNTG…GYVL), and 179 to 199 (FFAL…IHLT). Heme b contacts are provided by His-84 and His-98. Positions 183 and 197 each coordinate heme b. His-202 serves as a coordination point for a ubiquinone. The next 4 membrane-spanning stretches (helical) occupy residues 227-247 (LKDI…ALFS), 289-309 (LGGV…PFLH), 321-341 (LSQL…WVGS), and 348-368 (FIII…ILFP).

This sequence belongs to the cytochrome b family. In terms of assembly, the cytochrome bc1 complex contains 11 subunits: 3 respiratory subunits (MT-CYB, CYC1 and UQCRFS1), 2 core proteins (UQCRC1 and UQCRC2) and 6 low-molecular weight proteins (UQCRH/QCR6, UQCRB/QCR7, UQCRQ/QCR8, UQCR10/QCR9, UQCR11/QCR10 and a cleavage product of UQCRFS1). This cytochrome bc1 complex then forms a dimer. It depends on heme b as a cofactor.

It is found in the mitochondrion inner membrane. Its function is as follows. Component of the ubiquinol-cytochrome c reductase complex (complex III or cytochrome b-c1 complex) that is part of the mitochondrial respiratory chain. The b-c1 complex mediates electron transfer from ubiquinol to cytochrome c. Contributes to the generation of a proton gradient across the mitochondrial membrane that is then used for ATP synthesis. The sequence is that of Cytochrome b (MT-CYB) from Thalassoica antarctica (Antarctic petrel).